Reading from the N-terminus, the 456-residue chain is Cytochrome c biogenesis protein CcsB (456 aa).

3 helical membrane passes run 29 to 49 (LRLA…GTVI), 88 to 108 (AGWF…CTFR), and 174 to 194 (VGPI…IWGS).

The protein belongs to the Ccs1/CcsB family. As to quaternary structure, may interact with CcsA.

It localises to the cellular thylakoid membrane. In terms of biological role, required during biogenesis of c-type cytochromes (cytochrome c6 and cytochrome f) at the step of heme attachment. The protein is Cytochrome c biogenesis protein CcsB of Synechococcus sp. (strain ATCC 27144 / PCC 6301 / SAUG 1402/1) (Anacystis nidulans).